The following is a 341-amino-acid chain: Zinc transporter ZIP11 (341 aa).

Helical transmembrane passes span 12–32 (LLGT…VFVF), 44–64 (LGFA…APAV), 72–92 (GFGS…AAFV), 193–213 (IALL…AVGV), 262–284 (FWYG…FAVV), 289–306 (ILPY…YVIM), and 321–341 (LASW…VGLG).

The protein belongs to the ZIP transporter (TC 2.A.5) family.

The protein resides in the cell membrane. The protein localises to the nucleus. It localises to the cytoplasm. Its subcellular location is the golgi apparatus. The enzyme catalyses Zn(2+)(in) = Zn(2+)(out). It catalyses the reaction Cu(2+)(in) = Cu(2+)(out). Zinc importer that regulates cytosolic zinc concentrations either via zinc influx from the extracellular compartment or efflux from intracellular organelles such as Golgi apparatus. May transport copper ions as well. The transport mechanism remains to be elucidated. This chain is Zinc transporter ZIP11 (SLC39A11), found in Bos taurus (Bovine).